Here is a 273-residue protein sequence, read N- to C-terminus: 3-methyl-2-oxobutanoate hydroxymethyltransferase (273 aa).

Residues D53 and D92 each coordinate Mg(2+). 3-methyl-2-oxobutanoate-binding positions include 53–54, D92, and K122; that span reads DS. E124 lines the Mg(2+) pocket. The active-site Proton acceptor is the E191.

It belongs to the PanB family. In terms of assembly, homodecamer; pentamer of dimers. Mg(2+) serves as cofactor.

Its subcellular location is the cytoplasm. The catalysed reaction is 3-methyl-2-oxobutanoate + (6R)-5,10-methylene-5,6,7,8-tetrahydrofolate + H2O = 2-dehydropantoate + (6S)-5,6,7,8-tetrahydrofolate. It participates in cofactor biosynthesis; (R)-pantothenate biosynthesis; (R)-pantoate from 3-methyl-2-oxobutanoate: step 1/2. Functionally, catalyzes the reversible reaction in which hydroxymethyl group from 5,10-methylenetetrahydrofolate is transferred onto alpha-ketoisovalerate to form ketopantoate. The chain is 3-methyl-2-oxobutanoate hydroxymethyltransferase from Phocaeicola vulgatus (strain ATCC 8482 / DSM 1447 / JCM 5826 / CCUG 4940 / NBRC 14291 / NCTC 11154) (Bacteroides vulgatus).